The following is a 444-amino-acid chain: Glutamyl-tRNA reductase (444 aa).

Residues 49-52 (TCNR), Ser117, 122-124 (EPQ), and Gln128 contribute to the substrate site. Cys50 serves as the catalytic Nucleophile. 202–207 (GAGETI) lines the NADP(+) pocket.

This sequence belongs to the glutamyl-tRNA reductase family. Homodimer.

The enzyme catalyses (S)-4-amino-5-oxopentanoate + tRNA(Glu) + NADP(+) = L-glutamyl-tRNA(Glu) + NADPH + H(+). It functions in the pathway porphyrin-containing compound metabolism; protoporphyrin-IX biosynthesis; 5-aminolevulinate from L-glutamyl-tRNA(Glu): step 1/2. In terms of biological role, catalyzes the NADPH-dependent reduction of glutamyl-tRNA(Glu) to glutamate 1-semialdehyde (GSA). The sequence is that of Glutamyl-tRNA reductase from Mannheimia succiniciproducens (strain KCTC 0769BP / MBEL55E).